A 163-amino-acid chain; its full sequence is Nucleotide-binding protein LA_3406 (163 aa).

Belongs to the YajQ family.

Nucleotide-binding protein. The sequence is that of Nucleotide-binding protein LA_3406 from Leptospira interrogans serogroup Icterohaemorrhagiae serovar Lai (strain 56601).